Here is a 378-residue protein sequence, read N- to C-terminus: Probable methyltransferase At1g29790 (378 aa).

Topologically, residues Met1–Met6 are cytoplasmic. The helical; Signal-anchor for type II membrane protein transmembrane segment at Ser7–Ser29 threads the bilayer. Topologically, residues Thr30–Arg378 are lumenal. Positions Thr67–Ser87 are disordered. The segment covering Ser74 to Ser87 has biased composition (low complexity). Asn247 carries an N-linked (GlcNAc...) asparagine glycan.

The protein belongs to the methyltransferase superfamily.

The protein resides in the golgi apparatus membrane. This is Probable methyltransferase At1g29790 from Arabidopsis thaliana (Mouse-ear cress).